Consider the following 355-residue polypeptide: UDP-N-acetylglucosamine--N-acetylmuramyl-(pentapeptide) pyrophosphoryl-undecaprenol N-acetylglucosamine transferase (355 aa).

UDP-N-acetyl-alpha-D-glucosamine-binding positions include 15–17, Asn127, Arg163, Ser191, Ile244, 263–268, and Gln288; these read TGG and ALTVSE.

It belongs to the glycosyltransferase 28 family. MurG subfamily.

It is found in the cell inner membrane. It catalyses the reaction di-trans,octa-cis-undecaprenyl diphospho-N-acetyl-alpha-D-muramoyl-L-alanyl-D-glutamyl-meso-2,6-diaminopimeloyl-D-alanyl-D-alanine + UDP-N-acetyl-alpha-D-glucosamine = di-trans,octa-cis-undecaprenyl diphospho-[N-acetyl-alpha-D-glucosaminyl-(1-&gt;4)]-N-acetyl-alpha-D-muramoyl-L-alanyl-D-glutamyl-meso-2,6-diaminopimeloyl-D-alanyl-D-alanine + UDP + H(+). The protein operates within cell wall biogenesis; peptidoglycan biosynthesis. In terms of biological role, cell wall formation. Catalyzes the transfer of a GlcNAc subunit on undecaprenyl-pyrophosphoryl-MurNAc-pentapeptide (lipid intermediate I) to form undecaprenyl-pyrophosphoryl-MurNAc-(pentapeptide)GlcNAc (lipid intermediate II). In Sodalis glossinidius (strain morsitans), this protein is UDP-N-acetylglucosamine--N-acetylmuramyl-(pentapeptide) pyrophosphoryl-undecaprenol N-acetylglucosamine transferase.